A 190-amino-acid polypeptide reads, in one-letter code: GTP cyclohydrolase 1 (190 aa).

Zn(2+) is bound by residues Cys80, His83, and Cys151.

Belongs to the GTP cyclohydrolase I family. As to quaternary structure, toroid-shaped homodecamer, composed of two pentamers of five dimers.

It catalyses the reaction GTP + H2O = 7,8-dihydroneopterin 3'-triphosphate + formate + H(+). It participates in cofactor biosynthesis; 7,8-dihydroneopterin triphosphate biosynthesis; 7,8-dihydroneopterin triphosphate from GTP: step 1/1. The protein is GTP cyclohydrolase 1 of Rickettsia typhi (strain ATCC VR-144 / Wilmington).